We begin with the raw amino-acid sequence, 357 residues long: uncharacterized protein (357 aa).

Positions 120-145 (SSSTVNHDQPAEQPSDKSTDDSTGYP) are disordered.

This is an uncharacterized protein from Caenorhabditis elegans.